The primary structure comprises 105 residues: MESSEVLQEIREVNLAYLLLAQRLVRENQVEAMFRLGVSKEIADILAKLTSAQLVKLAASNMVLCRFRFDDHALLSTLTHTAKSHDMQQIHAAILLARQPVESLN.

This sequence belongs to the FlhD family. Homodimer; disulfide-linked. Forms a heterohexamer composed of two FlhC and four FlhD subunits. Each FlhC binds a FlhD dimer, forming a heterotrimer, and a hexamer assembles by dimerization of two heterotrimers.

The protein resides in the cytoplasm. Functionally, functions in complex with FlhC as a master transcriptional regulator that regulates transcription of several flagellar and non-flagellar operons by binding to their promoter region. Activates expression of class 2 flagellar genes, including fliA, which is a flagellum-specific sigma factor that turns on the class 3 genes. Also regulates genes whose products function in a variety of physiological pathways. The protein is Flagellar transcriptional regulator FlhD of Cupriavidus necator (strain ATCC 17699 / DSM 428 / KCTC 22496 / NCIMB 10442 / H16 / Stanier 337) (Ralstonia eutropha).